Here is a 506-residue protein sequence, read N- to C-terminus: Histidine--tRNA ligase, mitochondrial (506 aa).

The transit peptide at 1–33 (MPLLGLLPRRAWASLLSQLLRPPCASCTGAVRC) directs the protein to the mitochondrion. The residue at position 67 (Ser67) is a Phosphoserine. L-histidine contacts are provided by residues 131–133 (DLT), Arg158, Gln174, Asp178, Arg327, and 331–332 (YY). Lys444 is subject to N6-acetyllysine.

It belongs to the class-II aminoacyl-tRNA synthetase family. Homodimer. As to expression, a high level expression is seen in the heart, kidney and skeletal muscle while a lower level expression is seen in the brain and liver.

The protein localises to the mitochondrion. The enzyme catalyses tRNA(His) + L-histidine + ATP = L-histidyl-tRNA(His) + AMP + diphosphate + H(+). Functionally, mitochondrial aminoacyl-tRNA synthetase that catalyzes the ATP-dependent ligation of histidine to the 3'-end of its cognate tRNA, via the formation of an aminoacyl-adenylate intermediate (His-AMP). This chain is Histidine--tRNA ligase, mitochondrial (HARS2), found in Homo sapiens (Human).